A 205-amino-acid polypeptide reads, in one-letter code: Methylthioribulose-1-phosphate dehydratase (205 aa).

Zn(2+) contacts are provided by H98 and H100.

Belongs to the aldolase class II family. MtnB subfamily. Zn(2+) serves as cofactor.

It carries out the reaction 5-(methylsulfanyl)-D-ribulose 1-phosphate = 5-methylsulfanyl-2,3-dioxopentyl phosphate + H2O. The protein operates within amino-acid biosynthesis; L-methionine biosynthesis via salvage pathway; L-methionine from S-methyl-5-thio-alpha-D-ribose 1-phosphate: step 2/6. Its function is as follows. Catalyzes the dehydration of methylthioribulose-1-phosphate (MTRu-1-P) into 2,3-diketo-5-methylthiopentyl-1-phosphate (DK-MTP-1-P). The sequence is that of Methylthioribulose-1-phosphate dehydratase from Gluconacetobacter diazotrophicus (strain ATCC 49037 / DSM 5601 / CCUG 37298 / CIP 103539 / LMG 7603 / PAl5).